The primary structure comprises 273 residues: Pantothenate synthetase (273 aa).

27 to 34 (MGALHDGH) is an ATP binding site. Catalysis depends on H34, which acts as the Proton donor. Q58 contacts (R)-pantoate. Q58 provides a ligand contact to beta-alanine. 144–147 (GKKD) contacts ATP. Q150 provides a ligand contact to (R)-pantoate. ATP contacts are provided by residues V173 and 181-184 (LSSR).

It belongs to the pantothenate synthetase family. Homodimer.

It is found in the cytoplasm. It catalyses the reaction (R)-pantoate + beta-alanine + ATP = (R)-pantothenate + AMP + diphosphate + H(+). Its pathway is cofactor biosynthesis; (R)-pantothenate biosynthesis; (R)-pantothenate from (R)-pantoate and beta-alanine: step 1/1. In terms of biological role, catalyzes the condensation of pantoate with beta-alanine in an ATP-dependent reaction via a pantoyl-adenylate intermediate. In Campylobacter curvus (strain 525.92), this protein is Pantothenate synthetase.